Consider the following 354-residue polypeptide: Falstatin (354 aa).

Positions 1-21 (MKSITFFVFNICSILALLSHC) are cleaved as a signal peptide. A BC loop; binds and inhibits the active site cavity of cysteine proteases motif is present at residues 226–236 (LEGNAGTGYLW). A disordered region spans residues 274–317 (KYKIDEHDSSKNVNREIESPEQKESDSKPKKPQMQLLGGPDRMR). Positions 275-302 (YKIDEHDSSKNVNREIESPEQKESDSKP) are enriched in basic and acidic residues.

Belongs to the protease inhibitor I71 family. Oligomer; probably composed of 10 monomers. Post-translationally, during the liver stage, proteolytically cleaved.

The protein localises to the secreted. It is found in the cytoplasmic vesicle. The protein resides in the secretory vesicle. Its subcellular location is the microneme. It localises to the host cytoplasm. The protein localises to the parasitophorous vacuole lumen. Its function is as follows. Cysteine protease inhibitor. Required for the invasion of host erythrocytes by merozoites. In the mosquito vector, essential for the gliding motility of hemocoel sporozoites and, therefore, for salivary gland invasion and the subsequent transmission from the mosquito to the mammalian host. Required for the invasion of host hepatocytes. During the liver stage, may prevent host hepatocyte cell death likely by inhibiting host cysteine proteases. The sequence is that of Falstatin from Plasmodium berghei (strain Anka).